The sequence spans 1110 residues: Serine/threonine-protein kinase PknK (1110 aa).

Residues 26–283 (FDNVEEIGRG…TAADVGEELR (258 aa)) form the Protein kinase domain. ATP is bound by residues 32–40 (IGRGGFGVV) and Lys55. Arg148 acts as the Proton acceptor in catalysis. 2 residues coordinate Mg(2+): Asn154 and Asp167. The interval 308–343 (RSPEAHAAHRHTGGGTPTVPTPPTPATKYRPSVPTG) is disordered.

The protein belongs to the protein kinase superfamily. Ser/Thr protein kinase family.

The enzyme catalyses L-seryl-[protein] + ATP = O-phospho-L-seryl-[protein] + ADP + H(+). The catalysed reaction is L-threonyl-[protein] + ATP = O-phospho-L-threonyl-[protein] + ADP + H(+). This chain is Serine/threonine-protein kinase PknK (pknK), found in Mycobacterium bovis (strain ATCC BAA-935 / AF2122/97).